Consider the following 206-residue polypeptide: Small ribosomal subunit protein uS4 (206 aa).

Positions 23 to 47 (AKSPLNRREYGPGQHGQRRKGKLSD) are disordered. One can recognise an S4 RNA-binding domain in the interval 94–157 (RRLDAVIYRA…RQLAIVLESV (64 aa)).

The protein belongs to the universal ribosomal protein uS4 family. In terms of assembly, part of the 30S ribosomal subunit. Contacts protein S5. The interaction surface between S4 and S5 is involved in control of translational fidelity.

Its function is as follows. One of the primary rRNA binding proteins, it binds directly to 16S rRNA where it nucleates assembly of the body of the 30S subunit. In terms of biological role, with S5 and S12 plays an important role in translational accuracy. This Paracoccus denitrificans (strain Pd 1222) protein is Small ribosomal subunit protein uS4.